The sequence spans 360 residues: Protein RecA (360 aa).

Residue 69 to 76 (GPESSGKT) participates in ATP binding.

The protein belongs to the RecA family.

The protein localises to the cytoplasm. Its function is as follows. Can catalyze the hydrolysis of ATP in the presence of single-stranded DNA, the ATP-dependent uptake of single-stranded DNA by duplex DNA, and the ATP-dependent hybridization of homologous single-stranded DNAs. It interacts with LexA causing its activation and leading to its autocatalytic cleavage. This Trichodesmium erythraeum (strain IMS101) protein is Protein RecA.